The primary structure comprises 112 residues: UstYa family oxidase VicYb (112 aa).

Short sequence motifs (HXXHC) lie at residues 9–13 (HYLHC) and 36–40 (HLDHC).

This sequence belongs to the ustYa family.

It participates in mycotoxin biosynthesis. Its function is as follows. UstYa family oxidase, part of the gene cluster that mediates the biosynthesis of the secondary metabolite victorin, the molecular basis for Victoria blight of oats. Within the pathway, vicYb catalyzes the oxidative cyclization of the core peptide. The pathway starts with the processing of the precursor vicA1 by several endopeptidases including kexin proteases as well as the cluster-specific S28 family peptidases vicPa and vicPb to produce 7 identical copies of the hexapeptide Gly-Leu-Lys-Leu-Ala-Phe. After being excised from the precursor peptide, the core peptides are cyclized and modified post-translationally by enzymes encoded within the gene cluster. The ustYa family oxidase vicYb is required for the formation of the macrocycle in victorin and the copper amine oxidases (CAOs) vicK1 and vicK2 are responsible for converting victorin to the active form by oxidizing the N-terminal glycyl residue in the peptides to glyoxylate. Relaxed substrate specificity of enzymes in the victorin biosynthetic pathway results in a metabolic grid that produces a set of analogs including victorinines B, C, E or HV-toxin M. This is UstYa family oxidase VicYb from Bipolaris victoriae (strain FI3) (Victoria blight of oats agent).